Reading from the N-terminus, the 260-residue chain is Phosphoribosylaminoimidazole-succinocarboxamide synthase (260 aa).

Belongs to the SAICAR synthetase family.

It catalyses the reaction 5-amino-1-(5-phospho-D-ribosyl)imidazole-4-carboxylate + L-aspartate + ATP = (2S)-2-[5-amino-1-(5-phospho-beta-D-ribosyl)imidazole-4-carboxamido]succinate + ADP + phosphate + 2 H(+). Its pathway is purine metabolism; IMP biosynthesis via de novo pathway; 5-amino-1-(5-phospho-D-ribosyl)imidazole-4-carboxamide from 5-amino-1-(5-phospho-D-ribosyl)imidazole-4-carboxylate: step 1/2. The protein is Phosphoribosylaminoimidazole-succinocarboxamide synthase of Pelagibacter ubique (strain HTCC1062).